Here is a 255-residue protein sequence, read N- to C-terminus: uncharacterized protein (255 aa).

An N-terminal signal peptide occupies residues 1–28 (MFKLNFKNNYKVLTLLFSLTLSMFVSNA). Asn38, Asn61, and Asn83 each carry an N-linked (GlcNAc...) asparagine glycan.

The protein localises to the secreted. This is an uncharacterized protein from Dictyostelium discoideum (Social amoeba).